Here is a 252-residue protein sequence, read N- to C-terminus: C-X-C motif chemokine 16 (252 aa).

The N-terminal stretch at 1-25 is a signal peptide; that stretch reads MMLGRTSRLLLVLLFIAYATTSGNG. At 26 to 198 the chain is on the extracellular side; sequence NEGSKVGSCP…RGPQAGTSAT (173 aa). Disulfide bonds link Cys34–Cys64 and Cys36–Cys78. Disordered regions lie at residues 115–145 and 163–195; these read LPEPTEAAPSDTATTSQTYLPSTLQRTQQPT and TTTYTSGHSLGAEPEAKENQKQLKENRGPQAGT. Positions 125-145 are enriched in polar residues; that stretch reads DTATTSQTYLPSTLQRTQQPT. A compositionally biased stretch (basic and acidic residues) spans 176–189; sequence PEAKENQKQLKENR. A helical membrane pass occupies residues 199 to 219; that stretch reads VPVLSLLAIVFILAGVLLYVV. Residues 220–252 are Cytoplasmic-facing; that stretch reads CKRRKNQLLQHPPDLAASLYTCSRRTRAENGTL.

This sequence belongs to the intercrine alpha (chemokine CxC) family. Glycosylated.

It is found in the membrane. Its function is as follows. Induces a strong chemotactic response. Induces calcium mobilization. Binds to CXCR6/Bonzo. Also acts as a scavenger receptor on macrophages, which specifically binds to OxLDL (oxidized low density lipoprotein), suggesting that it may be involved in pathophysiology such as atherogenesis. The chain is C-X-C motif chemokine 16 (CXCL16) from Bos taurus (Bovine).